The following is a 426-amino-acid chain: Lipase 7 (426 aa).

The N-terminal stretch at methionine 1 to glutamine 15 is a signal peptide. N-linked (GlcNAc...) asparagine glycosylation is found at asparagine 74, asparagine 175, and asparagine 179. 2 disulfide bridges follow: cysteine 108–cysteine 269 and cysteine 341–cysteine 385. Serine 190 acts as the Charge relay system in catalysis. Asparagine 223 carries N-linked (GlcNAc...) asparagine glycosylation. Histidine 358 (charge relay system) is an active-site residue. N-linked (GlcNAc...) asparagine glycans are attached at residues asparagine 378, asparagine 379, asparagine 422, and asparagine 423.

This sequence belongs to the AB hydrolase superfamily. Lipase family. Class Lip subfamily.

It catalyses the reaction a triacylglycerol + H2O = a diacylglycerol + a fatty acid + H(+). Its function is as follows. Secreted lipase that is able to hydrolze both the neutral triacylglycerols and the monopalmitate ester Tween 40, allowing the use of hydrolyzed products as carbon sources. Has broad lipolytic activity, which may be important for colonization and subsequent infection, therefore contributing to the persistence and virulence in human tissue. The chain is Lipase 7 from Candida albicans (strain SC5314 / ATCC MYA-2876) (Yeast).